The chain runs to 104 residues: MRGQQTPPQQPTRVRTPRENENEVLGVIEQMLGASRVRVRCMDGKLRMGRIPGKLKRKIWVREDDVVIVTPWEVQSDEKCDVIWRYTKGQVDWLNRKGYLDFMR.

Residues 1 to 14 are compositionally biased toward low complexity; it reads MRGQQTPPQQPTRV. The segment at 1 to 20 is disordered; sequence MRGQQTPPQQPTRVRTPREN. One can recognise an S1-like domain in the interval 12-87; it reads TRVRTPRENE…EKCDVIWRYT (76 aa).

This sequence belongs to the eIF-1A family.

Seems to be required for maximal rate of protein biosynthesis. Enhances ribosome dissociation into subunits and stabilizes the binding of the initiator Met-tRNA(I) to 40 S ribosomal subunits. The sequence is that of Translation initiation factor 1A from Methanococcus maripaludis (strain DSM 14266 / JCM 13030 / NBRC 101832 / S2 / LL).